The chain runs to 146 residues: UPF0178 protein BCG9842_B2187 (146 aa).

It belongs to the UPF0178 family.

The chain is UPF0178 protein BCG9842_B2187 from Bacillus cereus (strain G9842).